A 327-amino-acid polypeptide reads, in one-letter code: tRNA uridine(34) hydroxylase (327 aa).

The Rhodanese domain maps to 130 to 224 (LDEDTVVLDT…YGKDPEVQGE (95 aa)). The Cysteine persulfide intermediate role is filled by Cys-184.

It belongs to the TrhO family.

The enzyme catalyses uridine(34) in tRNA + AH2 + O2 = 5-hydroxyuridine(34) in tRNA + A + H2O. Catalyzes oxygen-dependent 5-hydroxyuridine (ho5U) modification at position 34 in tRNAs. The sequence is that of tRNA uridine(34) hydroxylase from Streptococcus thermophilus (strain ATCC BAA-491 / LMD-9).